The chain runs to 405 residues: MNVYLVGGAVRNRLLKLPVTERDWVVVGATPEEMLLLGYKKVGKNFPVFLHPETKEEYALARTERKMAEGHTGFACYASPDVTLEEDLLRRDLTINAIACNDKGDLIDPYQGEKDLNQLILRHVSEAFIEDPLRVLRVARFAAQFAHLGFSIDSVTLDLMTKISQSGELLTLSPERVWKETEKALLSPSPHIYFQVLKHCSAILVLFPEIDTLCSPLRCPLSHGLSTLSIAAKLTDQKEVRFAALCHILGKKLTEYDVLGTHDRAVLKRVPLCDLNKIEQLCERLKLPNLFRELLKHTLKYRGLVTIINRLSFPLLLNFFDELDLWRKPYRLEQLILISKADESTEGGVEGKHDYQAQYVREAFNIARAVSVKKILEGGFRKEAIQKELTRRRNQALDQWQKQKT.

Positions 8 and 11 each coordinate ATP. G8 and R11 together coordinate CTP. Residues E21 and D23 each contribute to the Mg(2+) site. Residues R91, R137, and R140 each coordinate ATP. CTP is bound by residues R91, R137, and R140. Residues P220–W326 form the HD domain.

Belongs to the tRNA nucleotidyltransferase/poly(A) polymerase family. Bacterial CCA-adding enzyme type 2 subfamily. It depends on Mg(2+) as a cofactor.

It carries out the reaction a tRNA precursor + 2 CTP + ATP = a tRNA with a 3' CCA end + 3 diphosphate. The catalysed reaction is a tRNA with a 3' CCA end + 2 CTP + ATP = a tRNA with a 3' CCACCA end + 3 diphosphate. In terms of biological role, catalyzes the addition and repair of the essential 3'-terminal CCA sequence in tRNAs without using a nucleic acid template. Adds these three nucleotides in the order of C, C, and A to the tRNA nucleotide-73, using CTP and ATP as substrates and producing inorganic pyrophosphate. tRNA 3'-terminal CCA addition is required both for tRNA processing and repair. Also involved in tRNA surveillance by mediating tandem CCA addition to generate a CCACCA at the 3' terminus of unstable tRNAs. While stable tRNAs receive only 3'-terminal CCA, unstable tRNAs are marked with CCACCA and rapidly degraded. The protein is CCA-adding enzyme of Hamiltonella defensa subsp. Acyrthosiphon pisum (strain 5AT).